Consider the following 105-residue polypeptide: U7-hexatoxin-Hi1a (105 aa).

An N-terminal signal peptide occupies residues 1 to 23 (MKTILLFLGVCAVGASMMTGGWT).

It belongs to the cystatin family. Contains 2 disulfide bonds. As to expression, expressed by the venom gland.

The protein resides in the secreted. In terms of biological role, inhibits various C1 cysteine proteases. This protein has no toxic activity and its function in the venom is unknown. It may play a role as a housekeeping or regulatory protein. This chain is U7-hexatoxin-Hi1a, found in Hadronyche infensa (Fraser island funnel-web spider).